The primary structure comprises 59 residues: Cecropin-A2 (59 aa).

An N-terminal signal peptide occupies residues 1–23; it reads MNFNKLFAIVLLAALVLLGQTEA.

It belongs to the cecropin family.

Its subcellular location is the secreted. Functionally, cecropins have lytic and antibacterial activity against several Gram-positive and Gram-negative bacteria. This is Cecropin-A2 (CECA2) from Aedes albopictus (Asian tiger mosquito).